Reading from the N-terminus, the 63-residue chain is Large ribosomal subunit protein bL35 (63 aa).

Belongs to the bacterial ribosomal protein bL35 family.

In Campylobacter jejuni (strain RM1221), this protein is Large ribosomal subunit protein bL35.